We begin with the raw amino-acid sequence, 238 residues long: 7-cyano-7-deazaguanine synthase (238 aa).

Residue 15–25 coordinates ATP; the sequence is FSGGQDSTTCL. Residues Cys203, Cys218, Cys221, and Cys224 each contribute to the Zn(2+) site.

The protein belongs to the QueC family. It depends on Zn(2+) as a cofactor.

It carries out the reaction 7-carboxy-7-deazaguanine + NH4(+) + ATP = 7-cyano-7-deazaguanine + ADP + phosphate + H2O + H(+). It functions in the pathway purine metabolism; 7-cyano-7-deazaguanine biosynthesis. In terms of biological role, catalyzes the ATP-dependent conversion of 7-carboxy-7-deazaguanine (CDG) to 7-cyano-7-deazaguanine (preQ(0)). The sequence is that of 7-cyano-7-deazaguanine synthase from Alkalilimnicola ehrlichii (strain ATCC BAA-1101 / DSM 17681 / MLHE-1).